A 312-amino-acid polypeptide reads, in one-letter code: Malate dehydrogenase 1 (312 aa).

Residues 11-16 (GAGQIG) and Asp35 each bind NAD(+). Residues Arg86 and Arg92 each contribute to the substrate site. NAD(+) is bound by residues Asn99 and 122 to 124 (ITN). Substrate is bound by residues Asn124 and Arg155. His179 acts as the Proton acceptor in catalysis.

This sequence belongs to the LDH/MDH superfamily. MDH type 3 family.

It carries out the reaction (S)-malate + NAD(+) = oxaloacetate + NADH + H(+). In terms of biological role, catalyzes the reversible oxidation of malate to oxaloacetate. In Anaeromyxobacter dehalogenans (strain 2CP-C), this protein is Malate dehydrogenase 1.